Reading from the N-terminus, the 196-residue chain is Aequorin-1 (196 aa).

The propeptide occupies 1 to 7; sequence MTSEQYS. EF-hand domains lie at 18–53, 54–108, 111–146, and 147–182; these read KWIG…IVIN, NLGA…SKNQ, LIRL…DGII, and QSSE…FWYT. Asp31, Asn33, Asn35, Arg37, and Glu42 together coordinate Ca(2+). May interact with the chromophore regions lie at residues 47-57, 62-72, and 107-117; these read ASDIVINNLGA, AKRHKDAVEAF, and NQITLIRLWGD. Asp124, Asp126, Asn128, Glu135, Asp160, Asp162, Ser164, Gln166, and Glu171 together coordinate Ca(2+).

This sequence belongs to the aequorin family. The reduction of the disulfide bond is necessary to regenerate aequorin from apoaequorin.

Functionally, ca(2+)-dependent bioluminescence photoprotein. Displays an emission peak at 470 nm (blue light). Trace amounts of calcium ion trigger the intramolecular oxidation of the chromophore, coelenterazine into coelenteramide and CO(2) with the concomitant emission of light. This Aequorea victoria (Water jellyfish) protein is Aequorin-1.